The chain runs to 473 residues: H(+)/Cl(-) exchange transporter ClcA (473 aa).

Over 1–32 (MKTDTPSLETPQAARLRRRQLIRQLLERDKTP) the chain is Cytoplasmic. A helical membrane pass occupies residues 33-69 (LAILFMAAVVGTLVGLAAVAFDKGVAWLQNQRMGALV). The Periplasmic portion of the chain corresponds to 70-76 (HTADNYP). A helical membrane pass occupies residues 77 to 100 (LLLTVAFLCSAVLAMFGYFLVRKY). A Selectivity filter part_1 motif is present at residues 106-110 (GSGIP). Ser-107 is a binding site for chloride. Positions 109-116 (IPEIEGAL) form an intramembrane region, helical. The Cytoplasmic segment spans residues 117–123 (EDQRPVR). The next 2 membrane-spanning stretches (helical) occupy residues 124 to 141 (WWRVLPVKFFGGLGTLGG) and 148 to 166 (EGPTVQIGGNIGRMVLDIF). The Selectivity filter part_2 motif lies at 146 to 150 (GREGP). The Cytoplasmic segment spans residues 167-176 (RLKGDEARHT). 2 consecutive intramembrane regions (helical) follow at residues 177–189 (LLATGAAAGLAAA) and 193–201 (PLAGILFII). The Cytoplasmic portion of the chain corresponds to 202-214 (EEMRPQFRYTLIS). A helical membrane pass occupies residues 215–232 (IKAVFIGVIMSTIMYRIF). The Periplasmic segment spans residues 233 to 252 (NHEVALIDVGKLSDAPLNTL). Residues 253 to 281 (WLYLILGIIFGIFGPIFNKWVLGMQDLLH) traverse the membrane as a helical segment. Residues 282–287 (RVHGGN) are Cytoplasmic-facing. A helical transmembrane segment spans residues 288-309 (ITKWILMGGAIGGLCGLLGFVA). Topologically, residues 310-329 (PATSGGGFNLIPIATAGNFS) are periplasmic. 2 consecutive transmembrane segments (helical) span residues 330-349 (MGMLVFIFVARVITTLLCFS) and 355-376 (GIFAPMLALGTVLGTAFGMVAV). The Selectivity filter part_3 signature appears at 355 to 359 (GIFAP). Chloride-binding residues include Ile-356 and Phe-357. At 377 to 386 (ELFPQYHLEA) the chain is on the periplasmic side. The helical intramembrane region spans 387–401 (GTFAIAGMGALLAAS). The segment at residues 402 to 404 (IRA) is an intramembrane region (note=Loop between two helices). The helical intramembrane region spans 405-416 (PLTGIILVLEMT). Residues 417–421 (DNYQL) constitute an intramembrane region (note=Loop between two helices). A helical transmembrane segment spans residues 422–438 (ILPMIITGLGATLLAQF). Over 439-473 (TGGKPLYSAILARTLAKQEAEQLARSKAASASENT) the chain is Cytoplasmic. Tyr-445 contacts chloride.

It belongs to the chloride channel (TC 2.A.49) family. ClcA subfamily. Homodimer.

The protein localises to the cell inner membrane. It carries out the reaction 2 chloride(in) + H(+)(out) = 2 chloride(out) + H(+)(in). In terms of biological role, proton-coupled chloride transporter. Functions as antiport system and exchanges two chloride ions for 1 proton. Probably acts as an electrical shunt for an outwardly-directed proton pump that is linked to amino acid decarboxylation, as part of the extreme acid resistance (XAR) response. This chain is H(+)/Cl(-) exchange transporter ClcA, found in Escherichia coli O9:H4 (strain HS).